Here is a 373-residue protein sequence, read N- to C-terminus: Peptide chain release factor 1-like, mitochondrial (373 aa).

The transit peptide at 1-13 directs the protein to the mitochondrion; the sequence is MRSGFLRSARRLW. Residues 56–111 are a coiled coil; sequence QLAAAARLLNEKERELRDTESLLHDENEDLKKLAESEIALCQKEIAELKHRIISLL. The tract at residues 229–293 is GGQ domain; that stretch reads PKDLRIDTKR…LRARLYSMRL (65 aa). The GGQ signature appears at 243–245; the sequence is GGQ. Residue glutamine 245 is modified to N5-methylglutamine.

The protein belongs to the prokaryotic/mitochondrial release factor family. Post-translationally, methylation of glutamine in the GGQ triplet by HEMK1 is conserved from bacteria to mammals.

The protein resides in the mitochondrion. Mitochondrial peptide chain release factor that directs the termination of translation in response to the peptide chain termination codons UAA and UAG. The sequence is that of Peptide chain release factor 1-like, mitochondrial (Mtrf1l) from Rattus norvegicus (Rat).